Consider the following 482-residue polypeptide: Major cardiolipin synthase ClsA (482 aa).

2 consecutive transmembrane segments (helical) span residues 3-23 (ISSI…IIVI) and 34-54 (WAWL…YLLF). PLD phosphodiesterase domains are found at residues 217–244 (LNYR…GDEY) and 395–422 (DNGF…DVRS). Residues histidine 222, lysine 224, aspartate 229, histidine 400, lysine 402, and aspartate 407 contribute to the active site.

Belongs to the phospholipase D family. Cardiolipin synthase subfamily.

It localises to the cell membrane. The catalysed reaction is 2 a 1,2-diacyl-sn-glycero-3-phospho-(1'-sn-glycerol) = a cardiolipin + glycerol. Its function is as follows. Catalyzes the reversible phosphatidyl group transfer from one phosphatidylglycerol molecule to another to form cardiolipin (CL) (diphosphatidylglycerol) and glycerol. The sequence is that of Major cardiolipin synthase ClsA (clsA) from Bacillus subtilis (strain 168).